Reading from the N-terminus, the 5099-residue chain is Malformin synthetase mlfA (5099 aa).

Residues 224–615 (QRHAADRPHS…CGRADTQVKL (392 aa)) form an adenylation 1 region. Positions 756 to 829 (THLENEIQLA…EAASLAKVRD (74 aa)) constitute a Carrier 1 domain. Serine 790 is subject to O-(pantetheine 4'-phosphoryl)serine. The segment at 867-1297 (EDVFPCTSMQ…PVDSLTLLKP (431 aa)) is condensation 1. Residues 1325 to 1717 (DRWVNRQPDT…GRKDTQVKLR (393 aa)) are adenylation 2. Residues 1857–1934 (ARAPELERTL…QIATQCEGIA (78 aa)) form the Carrier 2 domain. Serine 1894 is modified (O-(pantetheine 4'-phosphoryl)serine). Residues 1995 to 2040 (MQQESSSSPAPSVSSSSSSSSAPKPLLAQPEPPTNLRDSVPEPFSL) form a disordered region. Residues 1999–2017 (SSSSPAPSVSSSSSSSSAP) are compositionally biased toward low complexity. The segment at 2067 to 2482 (EDIYPATPLQ…ALSPGDKKVL (416 aa)) is condensation 2. The adenylation 3 stretch occupies residues 2505 to 2897 (LSTPHAPAVC…VGRKDGQLKL (393 aa)). The region spanning 3032-3108 (RPATAQERGL…RLVLHLQNTS (77 aa)) is the Carrier 3 domain. Serine 3069 is modified (O-(pantetheine 4'-phosphoryl)serine). Condensation stretches follow at residues 3125-3589 (WVHL…TYDQ) and 3610-4033 (DIYP…QQAM). Residues 4058–4446 (YANREAVCAW…VGRKDSQIKF (389 aa)) are adenylation 4. Positions 4581–4657 (PPSTGMQQGI…DLAEHISSRV (77 aa)) constitute a Carrier 4 domain. An O-(pantetheine 4'-phosphoryl)serine modification is found at serine 4618. A condensation 5 region spans residues 4696 to 5017 (DILPTTGFQR…LQTVVQHQNV (322 aa)).

It belongs to the NRP synthetase family.

The protein operates within secondary metabolite biosynthesis. In terms of biological role, nonribosomal peptide synthetase; part of the gene cluster that mediates the biosynthesis of malformins, cyclic pentapeptides with a disulfide bond between 2 consecutive cysteins, that show potential anti-tumor as well as antimalarial and antitrypanosomal properties. The nonribosomal peptide synthetase mlfA is responsible of the formation of the cyclic pentapeptide. The malformin biosynthesis clusters in malformin-producing fungi also contain enzymes involved in the formation of the disulfide bond between the two consecutive cysteins within malformins, in addition to additional tailoring enzymes such as methyltransferases or oxidoreductases. They are also composed of up to 4 major facilitator superfamily transporters, and transcription factors probably involved in the regulation of the expression of those clusters. This chain is Malformin synthetase mlfA, found in Aspergillus sclerotiicarbonarius (strain CBS 121057 / IBT 28362).